The following is a 188-amino-acid chain: Glandular kallikrein-3, submandibular (188 aa).

The 185-residue stretch at 1 to 185 (NYHVLLGQNN…FTSWIKEVMK (185 aa)) folds into the Peptidase S1 domain. N-linked (GlcNAc...) asparagine glycans are attached at residues Asn10 and Asn36. The Charge relay system role is filled by Asp47. 3 cysteine pairs are disulfide-bonded: Cys79/Cys146, Cys111/Cys125, and Cys136/Cys161. Ser140 (charge relay system) is an active-site residue.

Belongs to the peptidase S1 family. Kallikrein subfamily.

It catalyses the reaction Preferential cleavage of Arg-|-Xaa bonds in small molecule substrates. Highly selective action to release kallidin (lysyl-bradykinin) from kininogen involves hydrolysis of Met-|-Xaa or Leu-|-Xaa.. Functionally, glandular kallikreins cleave Met-Lys and Arg-Ser bonds in kininogen to release Lys-bradykinin. The chain is Glandular kallikrein-3, submandibular (Klk3) from Rattus norvegicus (Rat).